The primary structure comprises 553 residues: Solute carrier family 45 member 3 (553 aa).

11 helical membrane passes run 19–39, 52–72, 88–108, 120–140, 161–181, 198–218, 275–295, 323–343, 353–373, 382–402, and 522–542; these read LLINLLTFGLEVCLAAGITYV, FMTMVLGIGPVLGLVSVPLLG, FIWALSLGILLSLFLIPRAGW, LELALLILGVGLLDFCGQVCF, YSVYAFMISLGGCLGYLLPAI, CLFGLLTLIFLTCVAATLLVA, FVAELCSWMALMTFTLFYTDF, MGSLGLFLQCAISLVFSLVMD, AVYLASVAAFPVAAGATCLSH, AALTGFTFSALQILPYTLASL, and AYMVSAAGLGLVAIYFATQVV.

Belongs to the glycoside-pentoside-hexuronide (GPH) cation symporter transporter (TC 2.A.2) family.

It localises to the membrane. It carries out the reaction sucrose(out) + H(+)(out) = sucrose(in) + H(+)(in). Functionally, proton-associated sucrose transporter. May be able to transport also glucose and fructose. This Macaca fascicularis (Crab-eating macaque) protein is Solute carrier family 45 member 3 (SLC45A3).